Here is a 365-residue protein sequence, read N- to C-terminus: Uroporphyrinogen decarboxylase (365 aa).

Residues 27–31, Asp77, Tyr154, Thr209, and His327 each bind substrate; that span reads RQAGR.

This sequence belongs to the uroporphyrinogen decarboxylase family. Homodimer.

The protein localises to the cytoplasm. The catalysed reaction is uroporphyrinogen III + 4 H(+) = coproporphyrinogen III + 4 CO2. Its pathway is porphyrin-containing compound metabolism; protoporphyrin-IX biosynthesis; coproporphyrinogen-III from 5-aminolevulinate: step 4/4. Its function is as follows. Catalyzes the decarboxylation of four acetate groups of uroporphyrinogen-III to yield coproporphyrinogen-III. The chain is Uroporphyrinogen decarboxylase from Nitrosospira multiformis (strain ATCC 25196 / NCIMB 11849 / C 71).